A 463-amino-acid chain; its full sequence is Quinolone resistance protein NorB (463 aa).

14 consecutive transmembrane segments (helical) span residues 17–37 (IGIV…VNVV), 53–73 (IAVS…GGLA), 86–106 (IILN…LLLI), 107–127 (IGRL…LSII), 142–162 (YWSI…GAVA), 165–185 (LGWR…LFLI), 201–221 (FDIK…ILIT), 230–250 (SLLF…FIVL), 273–293 (TASN…NTFV), 299–319 (YSSL…LIMI), 334–354 (PMLI…LTFL), 357–377 (ILYV…LGIY), 403–423 (MASA…YAIV), and 435–455 (IALW…LLLV).

This sequence belongs to the major facilitator superfamily. TCR/Tet family.

The protein localises to the cell membrane. In terms of biological role, multidrug efflux pump that acts independently of NorA and is one of the factors that confers resistance against diverse quinolones and chemical compounds. Can facilitate bacterial survival in vivo when overexpressed in an abscess and may contribute to the relative resistance of staphylococcal abscesses to antimicrobial therapy. The protein is Quinolone resistance protein NorB (norB) of Staphylococcus aureus (strain MW2).